Consider the following 514-residue polypeptide: Threonine synthase (514 aa).

Lys-117 carries the post-translational modification N6-(pyridoxal phosphate)lysine. 4 residues coordinate pyridoxal 5'-phosphate: Gly-270, Asn-271, Phe-272, and Asp-274. Residues Ser-319 and Ser-321 each carry the phosphoserine modification. Residue Thr-449 coordinates pyridoxal 5'-phosphate.

It belongs to the threonine synthase family. The cofactor is pyridoxal 5'-phosphate.

The enzyme catalyses O-phospho-L-homoserine + H2O = L-threonine + phosphate. It functions in the pathway amino-acid biosynthesis; L-threonine biosynthesis; L-threonine from L-aspartate: step 5/5. Catalyzes the gamma-elimination of phosphate from L-phosphohomoserine and the beta-addition of water to produce L-threonine. The sequence is that of Threonine synthase (thrc) from Schizosaccharomyces pombe (strain 972 / ATCC 24843) (Fission yeast).